Here is a 946-residue protein sequence, read N- to C-terminus: Glycine dehydrogenase (decarboxylating) (946 aa).

Position 700 is an N6-(pyridoxal phosphate)lysine (Lys700).

Belongs to the GcvP family. As to quaternary structure, the glycine cleavage system is composed of four proteins: P, T, L and H. Pyridoxal 5'-phosphate serves as cofactor.

It catalyses the reaction N(6)-[(R)-lipoyl]-L-lysyl-[glycine-cleavage complex H protein] + glycine + H(+) = N(6)-[(R)-S(8)-aminomethyldihydrolipoyl]-L-lysyl-[glycine-cleavage complex H protein] + CO2. Functionally, the glycine cleavage system catalyzes the degradation of glycine. The P protein binds the alpha-amino group of glycine through its pyridoxal phosphate cofactor; CO(2) is released and the remaining methylamine moiety is then transferred to the lipoamide cofactor of the H protein. This is Glycine dehydrogenase (decarboxylating) from Pseudomonas fluorescens (strain SBW25).